A 341-amino-acid polypeptide reads, in one-letter code: Geranylfarnesyl diphosphate synthase (341 aa).

3 residues coordinate isopentenyl diphosphate: Lys-47, Arg-50, and Gln-95. Mg(2+) is bound by residues Asp-102 and Asp-106. An all-trans-polyprenyl diphosphate is bound at residue Arg-111. Arg-112 is an isopentenyl diphosphate binding site. Residues Lys-193, Thr-194, and Gln-231 each coordinate an all-trans-polyprenyl diphosphate.

It belongs to the FPP/GGPP synthase family. As to quaternary structure, homodimer. Mg(2+) serves as cofactor.

The protein localises to the cytoplasm. The enzyme catalyses isopentenyl diphosphate + (2E,6E,10E)-geranylgeranyl diphosphate = (2E,6E,10E,14E)-geranylfarnesyl diphosphate + diphosphate. In terms of biological role, probably involved in biosynthesis of the precursor for C25 (sesterterpanyl chain) moiety of C20-C25 diether (2-O-sesterterpanyl-3-O-phytanyl-sn-glycer) membrane lipid. Catalyzes the condensation of isopentenyl pyrophosphate with the allylic pyrophosphates to yield geranylfarnesyl diphosphate (GFPP). Geranylgeranyl diphosphate (GGPP) is the preferred substrate, but dimethylallyl diphosphate (DMAPP) and farnesyl diphosphate (FPP) can also be used as allylic substrate. The polypeptide is Geranylfarnesyl diphosphate synthase (idsA3) (Natronomonas pharaonis (strain ATCC 35678 / DSM 2160 / CIP 103997 / JCM 8858 / NBRC 14720 / NCIMB 2260 / Gabara) (Halobacterium pharaonis)).